The chain runs to 533 residues: Cytochrome P450 monooxygenase calL (533 aa).

A helical membrane pass occupies residues 8-28 (TQLALLVWGIAVCVTLAIVVP). Asn-33 carries an N-linked (GlcNAc...) asparagine glycan. The segment at 123 to 148 (GKFKQDQSGRSKNPVPGHDVKPGQPR) is disordered. An N-linked (GlcNAc...) asparagine glycan is attached at Asn-388. Cys-467 contacts heme.

The protein belongs to the cytochrome P450 family. It depends on heme as a cofactor.

It localises to the membrane. It functions in the pathway secondary metabolite biosynthesis. Functionally, cytochrome P450 monooxygenase; part of the gene cluster that mediates the biosynthesis of calbistrin A and related compounds. Calbistrin A is a secondary metabolite with an interesting structure that was recently found to have bioactivity against leukemia cells. It consists of two polyketides linked by an ester bond: a bicyclic decalin containing polyketide and a linear 12 carbon dioic acid structure. The polyketide synthase calA is probably responsible for forming the decalin moiety. Because calA lacks a designated enoylreductase (ER) domain, the required activity is provided by the trans-enoyl reductase calK. Following release from the PKS, calF then probably catalyzes the oxidation and the subsequent Diels Alder cycloisomerization that lead to the formation of the decalin moiety. The decalin polyketide backbone includes two C-methyl groups, at C7 and C11 in backbone, of which the C7 position is probably methylated by the methyltransferase domain of calA. A candidate for adding the methyl group at C11, if not done by CalA, is the cluster methyltransferase calH. Several additional tailoring enzymes within the cluster could be involved in the modification of the decalin polyketide product. Those include the 3 cytochrome P450 monooxygenases CalE, CalG and CalL, of which one might be responsible for the introduction of the extra hydroxyl group attached to the backbone of the decalin moiety, at position C9 in the backbone, that allows for attachment of the linear moiety. One tailoring enzyme activity that is expected to be involved in biosynthesis of calbistrin is an acyltransferase for connecting the two polyketide synthase products, and which could be performed by the cluster acyltransferase calJ. The enzyme responsible for the biosynthesis of the linear moiety, probably a second PKS, has not been identified yet. The polypeptide is Cytochrome P450 monooxygenase calL (Penicillium decumbens).